Here is a 363-residue protein sequence, read N- to C-terminus: Chorismate synthase (363 aa).

Residue Arg-47 coordinates NADP(+). FMN contacts are provided by residues 124–126, Gly-285, 300–304, and Arg-326; these read RSS and KPTAT.

This sequence belongs to the chorismate synthase family. Homotetramer. FMNH2 serves as cofactor.

It catalyses the reaction 5-O-(1-carboxyvinyl)-3-phosphoshikimate = chorismate + phosphate. The protein operates within metabolic intermediate biosynthesis; chorismate biosynthesis; chorismate from D-erythrose 4-phosphate and phosphoenolpyruvate: step 7/7. In terms of biological role, catalyzes the anti-1,4-elimination of the C-3 phosphate and the C-6 proR hydrogen from 5-enolpyruvylshikimate-3-phosphate (EPSP) to yield chorismate, which is the branch point compound that serves as the starting substrate for the three terminal pathways of aromatic amino acid biosynthesis. This reaction introduces a second double bond into the aromatic ring system. In Opitutus terrae (strain DSM 11246 / JCM 15787 / PB90-1), this protein is Chorismate synthase.